The following is a 396-amino-acid chain: Vacuolar protease A (396 aa).

The N-terminal stretch at 1–17 (MKGALLTAAMLLGSAQA) is a signal peptide. Positions 18–70 (GVHTMKLKKVPLAEQLESVPIDVQVQHLGQKYTGLRTESHTQAMFKATDAQVS) are cleaved as a propeptide — activation peptide. Residues 85–392 (YFSEITIGTP…DLGADTVGIA (308 aa)) enclose the Peptidase A1 domain. Residue Asp-103 is part of the active site. Residues Cys-116 and Cys-121 are joined by a disulfide bond. Residue Asn-138 is glycosylated (N-linked (GlcNAc...) asparagine). The active site involves Asp-284. Cysteines 318 and 351 form a disulfide. N-linked (GlcNAc...) asparagine glycosylation occurs at Asn-335.

The protein belongs to the peptidase A1 family.

Its subcellular location is the vacuole. The sequence is that of Vacuolar protease A (pep-4) from Neurospora crassa (strain ATCC 24698 / 74-OR23-1A / CBS 708.71 / DSM 1257 / FGSC 987).